Consider the following 295-residue polypeptide: Protoheme IX farnesyltransferase (295 aa).

Transmembrane regions (helical) follow at residues 8–28, 35–55, 84–104, 107–127, 132–152, 162–182, 208–228, 233–253, and 264–284; these read VTKPGIIFGNLISVIGGFLLA, YPLFVWTLLGVSLVVASGCVF, ASLVYATLLGIAGFMLLWFGA, LACWLGVMGFVVYVGVYSLYM, VYGTLIGSLSGAAPPVIGYCA, AILLAIFSLWQMPHSYAIAIF, ITLYIVAFAVATLMLSLGGYA, LVVAAAVSVWWLGMALRGYKV, and FVFSIVAITALSVMMSVDFMV.

Belongs to the UbiA prenyltransferase family. Protoheme IX farnesyltransferase subfamily.

Its subcellular location is the cell inner membrane. The catalysed reaction is heme b + (2E,6E)-farnesyl diphosphate + H2O = Fe(II)-heme o + diphosphate. The protein operates within porphyrin-containing compound metabolism; heme O biosynthesis; heme O from protoheme: step 1/1. Functionally, converts heme B (protoheme IX) to heme O by substitution of the vinyl group on carbon 2 of heme B porphyrin ring with a hydroxyethyl farnesyl side group. In Klebsiella pneumoniae subsp. pneumoniae (strain ATCC 700721 / MGH 78578), this protein is Protoheme IX farnesyltransferase.